We begin with the raw amino-acid sequence, 941 residues long: Bifunctional glutamine synthetase adenylyltransferase/adenylyl-removing enzyme (941 aa).

Positions Met-1–Pro-437 are adenylyl removase. Residues Pro-444–Leu-941 are adenylyl transferase.

This sequence belongs to the GlnE family. Requires Mg(2+) as cofactor.

The enzyme catalyses [glutamine synthetase]-O(4)-(5'-adenylyl)-L-tyrosine + phosphate = [glutamine synthetase]-L-tyrosine + ADP. It carries out the reaction [glutamine synthetase]-L-tyrosine + ATP = [glutamine synthetase]-O(4)-(5'-adenylyl)-L-tyrosine + diphosphate. Functionally, involved in the regulation of glutamine synthetase GlnA, a key enzyme in the process to assimilate ammonia. When cellular nitrogen levels are high, the C-terminal adenylyl transferase (AT) inactivates GlnA by covalent transfer of an adenylyl group from ATP to specific tyrosine residue of GlnA, thus reducing its activity. Conversely, when nitrogen levels are low, the N-terminal adenylyl removase (AR) activates GlnA by removing the adenylyl group by phosphorolysis, increasing its activity. The regulatory region of GlnE binds the signal transduction protein PII (GlnB) which indicates the nitrogen status of the cell. The polypeptide is Bifunctional glutamine synthetase adenylyltransferase/adenylyl-removing enzyme (Xanthomonas axonopodis pv. citri (strain 306)).